The chain runs to 1499 residues: DNA-directed RNA polymerase subunit beta' (1499 aa).

4 residues coordinate Zn(2+): Cys67, Cys69, Cys82, and Cys85. Mg(2+) contacts are provided by Asp499, Asp501, and Asp503. 4 residues coordinate Zn(2+): Cys867, Cys943, Cys950, and Cys953.

The protein belongs to the RNA polymerase beta' chain family. The RNAP catalytic core consists of 2 alpha, 1 beta, 1 beta' and 1 omega subunit. When a sigma factor is associated with the core the holoenzyme is formed, which can initiate transcription. It depends on Mg(2+) as a cofactor. The cofactor is Zn(2+).

It catalyses the reaction RNA(n) + a ribonucleoside 5'-triphosphate = RNA(n+1) + diphosphate. Its function is as follows. DNA-dependent RNA polymerase catalyzes the transcription of DNA into RNA using the four ribonucleoside triphosphates as substrates. The sequence is that of DNA-directed RNA polymerase subunit beta' from Prosthecochloris aestuarii (strain DSM 271 / SK 413).